The sequence spans 1268 residues: SR-related and CTD-associated factor 8 (1268 aa).

In terms of domain architecture, CID spans 1–139; the sequence is MEAVKTFNSE…PLLDMAAGIP (139 aa). Threonine 6 carries the phosphothreonine modification. Residue lysine 18 forms a Glycyl lysine isopeptide (Lys-Gly) (interchain with G-Cter in SUMO1) linkage. Phosphoserine is present on serine 273. 2 disordered regions span residues 322 to 355 and 385 to 469; these read QQQPQKVTPQDSQEGAFGSEHSASPSQGSSQQHF and EIFE…PVRS. Positions 342–354 are enriched in polar residues; the sequence is HSASPSQGSSQQH. The segment covering 394–443 has biased composition (basic residues); it reads VAVRSRSRTHSRSRSRSPRKRRSRSRSGSRKRKHRKRSRSRSRERKRKSS. The segment covering 447-461 has biased composition (basic and acidic residues); the sequence is SSERRAREREKERQK. One can recognise an RRM domain in the interval 477–551; that stretch reads TTLWVGQVDK…KVIKIAWALN (75 aa). Threonine 615 is subject to Phosphothreonine. Position 617 is a phosphoserine (serine 617). The disordered stretch occupies residues 753-808; that stretch reads AGNVFNPPSKAEPEEKVPHLTEHQIPSGENTRPVIPSDIPSSAPMLAQPPGASNTS. Basic and acidic residues predominate over residues 763–774; sequence AEPEEKVPHLTE. 3 positions are modified to asymmetric dimethylarginine: arginine 915, arginine 925, and arginine 936. Residues 947–1063 form a disordered region; sequence QRGIPPPSVL…GRDHFGRPPV (117 aa). Positions 961–970 are enriched in pro residues; the sequence is HPPPRGPFPP. Composition is skewed to basic and acidic residues over residues 1009-1025 and 1032-1063; these read EGDRDYRFPPIETREGI and DVRDVVGRPIDPREGPGRPPLDGRDHFGRPPV. The residue at position 1071 (arginine 1071) is an Asymmetric dimethylarginine. The tract at residues 1199 to 1268 is disordered; that stretch reads ATSQRKGENV…VVESTETEGT (70 aa). The span at 1249 to 1262 shows a compositional bias: low complexity; that stretch reads GTAAGVESEAVVES.

Interacts with POLR2A; via C-terminal heptapeptide repeat domain (CTD) phosphorylated at 'Ser-2' and 'Ser-5'. Identified in a complex with CDC5L and other spliceosomal proteins.

The protein resides in the nucleus. The protein localises to the nucleus matrix. Functionally, anti-terminator protein required to prevent early mRNA termination during transcription. Together with SCAF4, acts by suppressing the use of early, alternative poly(A) sites, thereby preventing the accumulation of non-functional truncated proteins. Mechanistically, associates with the phosphorylated C-terminal heptapeptide repeat domain (CTD) of the largest RNA polymerase II subunit (POLR2A), and subsequently binds nascent RNA upstream of early polyadenylation sites to prevent premature mRNA transcript cleavage and polyadenylation. Independently of SCAF4, also acts as a positive regulator of transcript elongation. The polypeptide is SR-related and CTD-associated factor 8 (Rattus norvegicus (Rat)).